The sequence spans 284 residues: MFIISSKNMLLKAQRLGYAVPAFNIHNLETMQVVVETAAELRSPLILAGTPGTYSYAGTGNVVAIARDLAKIWDLPLAVHLDHHEDLADITRKVQAGIRSVMIDGSHSPFEENVALVKSVVELSHRYDASVEAELGRLGGVEDDLGVDAKDALYTNPEQGREFVARTGIDSLAVVIGTAHGLYAAEPKLGFAALPPISERVDVPLVLHGASKLPDSDIRRAISLGVCKVNVATELKIAFSDALKHYFEENPDANEPRHYMKPAKAAMKDVVRKVIHVCGCEGQL.

Asp82 acts as the Proton donor in catalysis. His83 and His180 together coordinate Zn(2+). Gly181 is a dihydroxyacetone phosphate binding site. His208 lines the Zn(2+) pocket. Residues 209–211 (GAS) and 230–233 (NVAT) contribute to the dihydroxyacetone phosphate site.

It belongs to the class II fructose-bisphosphate aldolase family. TagBP aldolase GatY subfamily. In terms of assembly, forms a complex with GatZ. It depends on Zn(2+) as a cofactor.

The catalysed reaction is D-tagatofuranose 1,6-bisphosphate = D-glyceraldehyde 3-phosphate + dihydroxyacetone phosphate. It functions in the pathway carbohydrate metabolism; D-tagatose 6-phosphate degradation; D-glyceraldehyde 3-phosphate and glycerone phosphate from D-tagatose 6-phosphate: step 2/2. In terms of biological role, catalytic subunit of the tagatose-1,6-bisphosphate aldolase GatYZ, which catalyzes the reversible aldol condensation of dihydroxyacetone phosphate (DHAP or glycerone-phosphate) with glyceraldehyde 3-phosphate (G3P) to produce tagatose 1,6-bisphosphate (TBP). Requires GatZ subunit for full activity and stability. Is involved in the catabolism of galactitol and D-tagatose. The polypeptide is D-tagatose-1,6-bisphosphate aldolase subunit GatY (gatY) (Klebsiella oxytoca).